The chain runs to 512 residues: Neuronal acetylcholine receptor subunit alpha-3 (512 aa).

An N-terminal signal peptide occupies residues 1–23; it reads MNSASRITLFFLLTVLITQECLS. Topologically, residues 24-242 are extracellular; the sequence is SKGEDRLFRR…PLFYTINLII (219 aa). 2 N-linked (GlcNAc...) asparagine glycosylation sites follow: Asn-47 and Asn-164. Cystine bridges form between Cys-151-Cys-165 and Cys-215-Cys-216. Residues 243–258 traverse the membrane as a helical segment; sequence PCLLISFLTILVFYLP. The Cytoplasmic segment spans residues 259-260; it reads SD. The chain crosses the membrane as a helical span at residues 261 to 277; it reads CGEKVTLCISVLLSLTV. A Na(+)-binding site is contributed by Glu-263. Residues 278-299 lie on the Extracellular side of the membrane; that stretch reads FLLVITETIPSTSLVIPLIGEY. Residues 300 to 318 traverse the membrane as a helical segment; the sequence is LLFTMIFVTLSIVITVFVL. Residues 319–482 lie on the Cytoplasmic side of the membrane; the sequence is NVHYRTPMTH…EDDWKYVAMV (164 aa). The interval 356–389 is disordered; that stretch reads ESSGKGGGEIAGSSGTGGGRGAEGKKMKSSASQQ. Gly residues predominate over residues 359–376; the sequence is GKGGGEIAGSSGTGGGRG. The helical transmembrane segment at 483–501 threads the bilayer; sequence IDRIFLWVFVLVCVLGTLG. The Extracellular portion of the chain corresponds to 502-512; that stretch reads LFLQPLIGFFS.

Belongs to the ligand-gated ion channel (TC 1.A.9) family. Acetylcholine receptor (TC 1.A.9.1) subfamily. Alpha-3/CHRNA3 sub-subfamily. As to quaternary structure, neuronal AChR is composed of two different types of subunits: alpha and beta. CHRNA3/Alpha-3 subunit can be combined to CHRNB2/beta-2 or CHRNB4/beta-4 to give rise to functional receptors. As to expression, expressed in retina and brain.

The protein resides in the synaptic cell membrane. Its subcellular location is the cell membrane. The protein localises to the endoplasmic reticulum. It is found in the golgi apparatus. It catalyses the reaction K(+)(in) = K(+)(out). The enzyme catalyses Na(+)(in) = Na(+)(out). The catalysed reaction is Ca(2+)(in) = Ca(2+)(out). Activated by a myriad of ligands such as acetylcholine, cytisine, nicotine, choline and epibatidine. The heteropentamer CHRNA3:CHRNB2 activity is blocked by alpha-conotoxins ImI, ImII, PnIA, GID and MII. The heteropentamer CHRNA3:CHRNB4 activity is blocked by the alpha-conotoxin ImI and AuIB. Component of neuronal acetylcholine receptors (nAChRs) that function as pentameric, ligand-gated cation channels with high calcium permeability among other activities. nAChRs are excitatory neurotrasnmitter receptors formed by a collection of nAChR subunits known to mediate synaptic transmission in the nervous system and the neuromuscular junction. Each nAchR subunit confers differential attributes to channel properties, including activation, deactivation and desensitization kinetics, pH sensitivity, cation permeability, and binding to allosteric modulators. CHRNA3 forms heteropentameric neuronal acetylcholine receptors with CHRNB2 and CHRNB4. CHRNA3:CHRNB4 being predominant in neurons of the autonomic ganglia, it is known as ganglionic nicotinic receptor. CHRNA3:CHRNB4 also plays an important role in the habenulo-interpeduncular tract, modulating the mesolimbic dopamine system and affecting reward circuits and addiction. Hypothalamic CHRNA3:CHRNB4 nAChR activation by nicotine leads to activation of POMC neurons and a decrease in food intake. Also expressed in the urothelium where it modulates reflex bladder activity by increasing intracellular calcium through extracellular influx and basal ATP release. This is Neuronal acetylcholine receptor subunit alpha-3 (chrna3) from Carassius auratus (Goldfish).